Reading from the N-terminus, the 334-residue chain is Fructose-1,6-bisphosphatase class 1 (334 aa).

Mg(2+) contacts are provided by Glu90, Asp113, Leu115, and Asp116. Substrate-binding positions include Asp116 to Ser119, Asn209, Tyr242, and Lys272. Glu278 serves as a coordination point for Mg(2+).

The protein belongs to the FBPase class 1 family. Homotetramer. Mg(2+) is required as a cofactor.

The protein resides in the cytoplasm. The enzyme catalyses beta-D-fructose 1,6-bisphosphate + H2O = beta-D-fructose 6-phosphate + phosphate. It participates in carbohydrate biosynthesis; gluconeogenesis. The chain is Fructose-1,6-bisphosphatase class 1 from Actinobacillus pleuropneumoniae serotype 5b (strain L20).